The chain runs to 161 residues: Ferric uptake regulation protein 1 (161 aa).

Zn(2+) is bound by residues Cys-94 and Cys-97.

The protein belongs to the Fur family.

The protein resides in the cytoplasm. Functionally, acts as a global negative controlling element, employing Fe(2+) as a cofactor to bind the operator of the repressed genes. This Mycolicibacterium fortuitum (Mycobacterium fortuitum) protein is Ferric uptake regulation protein 1 (fur1).